We begin with the raw amino-acid sequence, 1066 residues long: FHIP family protein GI14169 (1066 aa).

Residues 1–11 (MSWLRTSPLRQ) are compositionally biased toward polar residues. The disordered stretch occupies residues 1-35 (MSWLRTSPLRQSLTRSGSSSGNGSSGTATTMRQRP). Positions 12 to 30 (SLTRSGSSSGNGSSGTATT) are enriched in low complexity. The residue at position 500 (serine 500) is a Phosphoserine. The interval 651–682 (GIDVTTTTTASASDTDLEHNNNSSSISSGRRD) is disordered. Low complexity predominate over residues 655-678 (TTTTTASASDTDLEHNNNSSSISS). Position 820 is a phosphoserine (serine 820). Disordered stretches follow at residues 821–913 (PLHQ…GNSA) and 935–1007 (SGGE…TGNF). Residues 822 to 855 (LHQQLQHQQQHQQLAQTNSHTQQQQQQQQQQAQQ) show a composition bias toward low complexity. Polar residues predominate over residues 856–874 (RSTYATLSAATPVQASPTS). Low complexity predominate over residues 890–913 (SRSITSMFSRRSTSSTPASNGNSA). A compositionally biased stretch (polar residues) spans 947 to 971 (QDSTRGNTCETSLSTAPRQEPQTNV). A compositionally biased stretch (low complexity) spans 972-997 (GSSSNSSIGSSTQTLSGTHSSSTLHG).

This sequence belongs to the FHIP family.

The chain is FHIP family protein GI14169 from Drosophila mojavensis (Fruit fly).